Consider the following 328-residue polypeptide: MNFIDEVKIYIKGGNGGNGCVSFHREKFIDRGGPDGGDGGRGGSIIFRSNHHLNTLVNYRYKQHFIADSGENGKGSNKSGKSGKSLTLDVPIGTQIFAEDSDILLHDFTEDDQTFEIIKGGNGGLGNSHFKTSVNQAPRRRTEGEIAEEMWVQLSLKLLSDVGLVGLPNAGKSTFLSVVSAAKPKIADYPFTTLVPNLGVVYIDDEEFVIADIPGLIEGASQGHGLGDKFLKHIERCNVLIHLIDGSSEDVVADYNIVRTELESYSDYLKDKTQIICLNKIDVLTDEEIAEKTTQLQKITGKEIFPISTYTNTGITKIIKLALQTIKD.

The Obg domain maps to 1-159 (MNFIDEVKIY…MWVQLSLKLL (159 aa)). The OBG-type G domain maps to 160 to 327 (SDVGLVGLPN…IIKLALQTIK (168 aa)). GTP is bound by residues 166–173 (GLPNAGKS), 191–195 (FTTLV), 212–215 (DIPG), 279–282 (NKID), and 308–310 (STY). Mg(2+) is bound by residues Ser-173 and Thr-193.

The protein belongs to the TRAFAC class OBG-HflX-like GTPase superfamily. OBG GTPase family. Monomer. Mg(2+) is required as a cofactor.

It localises to the cytoplasm. In terms of biological role, an essential GTPase which binds GTP, GDP and possibly (p)ppGpp with moderate affinity, with high nucleotide exchange rates and a fairly low GTP hydrolysis rate. Plays a role in control of the cell cycle, stress response, ribosome biogenesis and in those bacteria that undergo differentiation, in morphogenesis control. In Rickettsia bellii (strain RML369-C), this protein is GTPase Obg.